Consider the following 73-residue polypeptide: Translation initiation factor IF-1 (73 aa).

In terms of domain architecture, S1-like spans 1–73 (MAKKDGAIEI…TRGRIVYRYK (73 aa)).

It belongs to the IF-1 family. In terms of assembly, component of the 30S ribosomal translation pre-initiation complex which assembles on the 30S ribosome in the order IF-2 and IF-3, IF-1 and N-formylmethionyl-tRNA(fMet); mRNA recruitment can occur at any time during PIC assembly.

The protein localises to the cytoplasm. In terms of biological role, one of the essential components for the initiation of protein synthesis. Stabilizes the binding of IF-2 and IF-3 on the 30S subunit to which N-formylmethionyl-tRNA(fMet) subsequently binds. Helps modulate mRNA selection, yielding the 30S pre-initiation complex (PIC). Upon addition of the 50S ribosomal subunit IF-1, IF-2 and IF-3 are released leaving the mature 70S translation initiation complex. The sequence is that of Translation initiation factor IF-1 from Thermobifida fusca (strain YX).